We begin with the raw amino-acid sequence, 197 residues long: Imidazoleglycerol-phosphate dehydratase (197 aa).

This sequence belongs to the imidazoleglycerol-phosphate dehydratase family.

It is found in the cytoplasm. The catalysed reaction is D-erythro-1-(imidazol-4-yl)glycerol 3-phosphate = 3-(imidazol-4-yl)-2-oxopropyl phosphate + H2O. Its pathway is amino-acid biosynthesis; L-histidine biosynthesis; L-histidine from 5-phospho-alpha-D-ribose 1-diphosphate: step 6/9. The chain is Imidazoleglycerol-phosphate dehydratase from Alkalilimnicola ehrlichii (strain ATCC BAA-1101 / DSM 17681 / MLHE-1).